The chain runs to 408 residues: Peptidase T (408 aa).

Residues Met-1–Ser-28 are disordered. A compositionally biased stretch (polar residues) spans Arg-11–Ser-28. His-78 serves as a coordination point for Zn(2+). Asp-80 is a catalytic residue. Asp-140 contributes to the Zn(2+) binding site. The Proton acceptor role is filled by Glu-174. Zn(2+) is bound by residues Glu-175, Asp-197, and His-379.

It belongs to the peptidase M20B family. Zn(2+) is required as a cofactor.

The protein localises to the cytoplasm. The enzyme catalyses Release of the N-terminal residue from a tripeptide.. Cleaves the N-terminal amino acid of tripeptides. In Staphylococcus aureus (strain USA300 / TCH1516), this protein is Peptidase T.